Here is a 319-residue protein sequence, read N- to C-terminus: Zinc finger protein C19B12.07c (319 aa).

The C2H2-type zinc finger occupies 146–170 (FRCLCCHVPCKNKKLLREHMNNKRH).

It belongs to the ZNF277 family.

The protein localises to the nucleus. This Schizosaccharomyces pombe (strain 972 / ATCC 24843) (Fission yeast) protein is Zinc finger protein C19B12.07c.